Consider the following 708-residue polypeptide: Elongation factor G (708 aa).

The 283-residue stretch at 8-290 (KRYRNIGISA…AVIQYLPAPM (283 aa)) folds into the tr-type G domain. GTP-binding positions include 17–24 (AHIDAGKT), 88–92 (DTPGH), and 142–145 (NKMD).

Belongs to the TRAFAC class translation factor GTPase superfamily. Classic translation factor GTPase family. EF-G/EF-2 subfamily.

The protein localises to the cytoplasm. In terms of biological role, catalyzes the GTP-dependent ribosomal translocation step during translation elongation. During this step, the ribosome changes from the pre-translocational (PRE) to the post-translocational (POST) state as the newly formed A-site-bound peptidyl-tRNA and P-site-bound deacylated tRNA move to the P and E sites, respectively. Catalyzes the coordinated movement of the two tRNA molecules, the mRNA and conformational changes in the ribosome. This chain is Elongation factor G, found in Psychrobacter cryohalolentis (strain ATCC BAA-1226 / DSM 17306 / VKM B-2378 / K5).